A 280-amino-acid polypeptide reads, in one-letter code: MKKEKLRIENISFQYPGAATYALKDVSFSLYEGEWVSIIGQNGSGKSTLAKLLNGLFLPEAGTITVNDTMVLSEETVWDVRKQIGMVFQNPDNQFVGTTVQDDVVFGLENIGMPREQMIERLEQALQLVRMEDFLNDEPHSLSGGQKQRVAIAGVLALQPSILILDEATSMLDPQGRREVVETVRQLVTQKGITVLSITHDLEEAAQSDRVIILNKGEILEEGTPEKIFKSSHMLQEIGLDVPFSVKIAELLKRNEILLQNTHLTMESLVNELWRLHSKK.

Residues 6–241 enclose the ABC transporter domain; it reads LRIENISFQY…SHMLQEIGLD (236 aa). Residue 40-47 participates in ATP binding; sequence GQNGSGKS.

It belongs to the ABC transporter superfamily. Energy-coupling factor EcfA family. Forms a stable energy-coupling factor (ECF) transporter complex composed of 2 membrane-embedded substrate-binding proteins (S component), 2 ATP-binding proteins (A component) and 2 transmembrane proteins (T component).

It localises to the cell membrane. In terms of biological role, ATP-binding (A) component of a common energy-coupling factor (ECF) ABC-transporter complex. Unlike classic ABC transporters this ECF transporter provides the energy necessary to transport a number of different substrates. This chain is Energy-coupling factor transporter ATP-binding protein EcfA1, found in Bacillus cereus (strain ATCC 14579 / DSM 31 / CCUG 7414 / JCM 2152 / NBRC 15305 / NCIMB 9373 / NCTC 2599 / NRRL B-3711).